A 157-amino-acid polypeptide reads, in one-letter code: Transcriptional repressor NrdR (157 aa).

The segment at Cys-3–Cys-34 is a zinc-finger region. The ATP-cone domain occupies Leu-49–Val-139.

It belongs to the NrdR family. Zn(2+) serves as cofactor.

Functionally, negatively regulates transcription of bacterial ribonucleotide reductase nrd genes and operons by binding to NrdR-boxes. The chain is Transcriptional repressor NrdR from Oceanobacillus iheyensis (strain DSM 14371 / CIP 107618 / JCM 11309 / KCTC 3954 / HTE831).